An 874-amino-acid chain; its full sequence is Alanine--tRNA ligase (874 aa).

Residues H562, H566, C664, and H668 each contribute to the Zn(2+) site.

The protein belongs to the class-II aminoacyl-tRNA synthetase family. Zn(2+) is required as a cofactor.

The protein localises to the cytoplasm. It catalyses the reaction tRNA(Ala) + L-alanine + ATP = L-alanyl-tRNA(Ala) + AMP + diphosphate. In terms of biological role, catalyzes the attachment of alanine to tRNA(Ala) in a two-step reaction: alanine is first activated by ATP to form Ala-AMP and then transferred to the acceptor end of tRNA(Ala). Also edits incorrectly charged Ser-tRNA(Ala) and Gly-tRNA(Ala) via its editing domain. The protein is Alanine--tRNA ligase of Shewanella woodyi (strain ATCC 51908 / MS32).